The following is an 816-amino-acid chain: uncharacterized protein (816 aa).

4 disordered regions span residues 1 to 34 (MLFNINRQEDDPFTQLINQSSANTQNQQAHQQES), 65 to 101 (RQNNRAYGEDAKNRKFPTVSATSAYSKQQPKDLGYKN), 154 to 406 (DEKD…ENPE), and 770 to 816 (RQHK…VMYA). A compositionally biased stretch (low complexity) spans 18 to 32 (NQSSANTQNQQAHQQ). The segment covering 83-92 (VSATSAYSKQ) has biased composition (polar residues). A compositionally biased stretch (low complexity) spans 161–223 (TTTSSSTSTS…STSTTSTSTT (63 aa)). Residues 246 to 260 (ESTSIGKGTADSAQI) are compositionally biased toward polar residues. At S286 the chain carries Phosphoserine. Residues 292–316 (DEQKEEKSDVKKVNPPSGEEKKEVE) show a composition bias toward basic and acidic residues. The span at 317–326 (AEGDAEEETE) shows a compositional bias: acidic residues. A compositionally biased stretch (low complexity) spans 327–342 (QSSAEESAERTSTPET). Residues S343 and S347 each carry the phosphoserine modification. A compositionally biased stretch (acidic residues) spans 343–353 (SEPESEEDESP). The span at 380–396 (KSPTSSSTQKSKTAAPS) shows a compositional bias: low complexity. Composition is skewed to basic and acidic residues over residues 770 to 792 (RQHKQAEGIHAAENHKIPNDRSQ) and 799 to 816 (PKDDSLYEYHTEEDVMYA). Residue T809 is modified to Phosphothreonine.

Post-translationally, pyrophosphorylated by 5-diphosphoinositol pentakisphosphate (5-IP7). Serine pyrophosphorylation is achieved by Mg(2+)-dependent, but enzyme independent transfer of a beta-phosphate from a inositol pyrophosphate to a pre-phosphorylated serine residue.

This is an uncharacterized protein from Saccharomyces cerevisiae (strain ATCC 204508 / S288c) (Baker's yeast).